We begin with the raw amino-acid sequence, 173 residues long: MKVYRDLYSNDEVCSDAYDHLDPFDNPDLSSVAFEVKTSKVAKGEEDYGIGYNDEEGGDQMNVDPNVEVVVDVVDKFALQSLPLTKKDYSSYIKKYIQRLVATLQEKNPERVEPFKTSVSEFVKHVLANFDDFEFYVGESLDYEAGLVYGYYKGEEVSPRLVFLKDGLVEERY.

Residues 1 to 173 enclose the TCTP domain; the sequence is MKVYRDLYSN…LKDGLVEERY (173 aa).

Belongs to the TCTP family.

It is found in the cytoplasm. In terms of biological role, involved in calcium binding and microtubule stabilization. The polypeptide is Translationally-controlled tumor protein homolog (TCTP) (Theileria annulata).